The sequence spans 306 residues: Pantothenate synthetase (306 aa).

Residue 37 to 44 (MGALHEGH) participates in ATP binding. Histidine 44 acts as the Proton donor in catalysis. A (R)-pantoate-binding site is contributed by glutamine 69. Glutamine 69 contributes to the beta-alanine binding site. 155-158 (GEKD) lines the ATP pocket. Residue glutamine 161 participates in (R)-pantoate binding. Residues valine 184 and 192-195 (KSSR) contribute to the ATP site.

The protein belongs to the pantothenate synthetase family. In terms of assembly, homodimer.

It is found in the cytoplasm. It carries out the reaction (R)-pantoate + beta-alanine + ATP = (R)-pantothenate + AMP + diphosphate + H(+). Its pathway is cofactor biosynthesis; (R)-pantothenate biosynthesis; (R)-pantothenate from (R)-pantoate and beta-alanine: step 1/1. Catalyzes the condensation of pantoate with beta-alanine in an ATP-dependent reaction via a pantoyl-adenylate intermediate. The chain is Pantothenate synthetase from Corynebacterium jeikeium (strain K411).